A 45-amino-acid chain; its full sequence is Small, acid-soluble spore protein P (45 aa).

Over residues 1–12 the composition is skewed to basic and acidic residues; sequence MTERHTAKDIRK. The interval 1 to 45 is disordered; the sequence is MTERHTAKDIRKNAPKGENPGQPEPLSGSKKVKKRNHVSQTNGEG.

Belongs to the SspP family.

It is found in the spore core. This Halalkalibacterium halodurans (strain ATCC BAA-125 / DSM 18197 / FERM 7344 / JCM 9153 / C-125) (Bacillus halodurans) protein is Small, acid-soluble spore protein P.